Consider the following 621-residue polypeptide: 1-deoxy-D-xylulose-5-phosphate synthase (621 aa).

Thiamine diphosphate contacts are provided by residues histidine 80 and 121–123; that span reads GHS. Residue aspartate 152 participates in Mg(2+) binding. Thiamine diphosphate contacts are provided by residues 153–154, asparagine 181, tyrosine 288, and glutamate 370; that span reads GA. Asparagine 181 provides a ligand contact to Mg(2+).

It belongs to the transketolase family. DXPS subfamily. Homodimer. Mg(2+) is required as a cofactor. Thiamine diphosphate serves as cofactor.

The enzyme catalyses D-glyceraldehyde 3-phosphate + pyruvate + H(+) = 1-deoxy-D-xylulose 5-phosphate + CO2. Its pathway is metabolic intermediate biosynthesis; 1-deoxy-D-xylulose 5-phosphate biosynthesis; 1-deoxy-D-xylulose 5-phosphate from D-glyceraldehyde 3-phosphate and pyruvate: step 1/1. In terms of biological role, catalyzes the acyloin condensation reaction between C atoms 2 and 3 of pyruvate and glyceraldehyde 3-phosphate to yield 1-deoxy-D-xylulose-5-phosphate (DXP). This Shewanella frigidimarina (strain NCIMB 400) protein is 1-deoxy-D-xylulose-5-phosphate synthase.